The primary structure comprises 168 residues: Protein archease (168 aa).

Position 2 is an N-acetylalanine (A2). Ca(2+) is bound by residues D39, D167, and I168.

Belongs to the archease family. As to quaternary structure, component of the tRNA-splicing ligase complex.

In terms of biological role, component of the tRNA-splicing ligase complex required to facilitate the enzymatic turnover of catalytic subunit RTCB. Together with DDX1, acts by facilitating the guanylylation of RTCB, a key intermediate step in tRNA ligation. The polypeptide is Protein archease (Zbtb8os) (Mus musculus (Mouse)).